The sequence spans 418 residues: Protein YdhQ (418 aa).

This is Protein YdhQ (ydhQ) from Escherichia coli (strain K12).